The following is a 233-amino-acid chain: Small ribosomal subunit protein uS3 (233 aa).

One can recognise a KH type-2 domain in the interval 39-107; sequence VRTFLTKELK…PAQINISEVR (69 aa).

It belongs to the universal ribosomal protein uS3 family. In terms of assembly, part of the 30S ribosomal subunit. Forms a tight complex with proteins S10 and S14.

Binds the lower part of the 30S subunit head. Binds mRNA in the 70S ribosome, positioning it for translation. The sequence is that of Small ribosomal subunit protein uS3 from Pseudoalteromonas translucida (strain TAC 125).